Here is a 330-residue protein sequence, read N- to C-terminus: Aspartate--ammonia ligase (330 aa).

It belongs to the class-II aminoacyl-tRNA synthetase family. AsnA subfamily.

The protein localises to the cytoplasm. The enzyme catalyses L-aspartate + NH4(+) + ATP = L-asparagine + AMP + diphosphate + H(+). It functions in the pathway amino-acid biosynthesis; L-asparagine biosynthesis; L-asparagine from L-aspartate (ammonia route): step 1/1. This chain is Aspartate--ammonia ligase, found in Streptococcus equi subsp. equi (strain 4047).